The following is a 373-amino-acid chain: Chaperone protein DnaJ (373 aa).

The J domain occupies 5–70 (CYYEVLEVSR…EKRSRYDRFG (66 aa)). The CR-type zinc-finger motif lies at 134-212 (GTEVELNIPV…CRGAGYVRKQ (79 aa)). Zn(2+) contacts are provided by C147, C150, C164, C167, C186, C189, C200, and C203. CXXCXGXG motif repeat units follow at residues 147 to 154 (CDTCEGSG), 164 to 171 (CSHCGGRG), 186 to 193 (CPACNGRG), and 200 to 207 (CSECRGAG).

This sequence belongs to the DnaJ family. Homodimer. It depends on Zn(2+) as a cofactor.

It localises to the cytoplasm. Participates actively in the response to hyperosmotic and heat shock by preventing the aggregation of stress-denatured proteins and by disaggregating proteins, also in an autonomous, DnaK-independent fashion. Unfolded proteins bind initially to DnaJ; upon interaction with the DnaJ-bound protein, DnaK hydrolyzes its bound ATP, resulting in the formation of a stable complex. GrpE releases ADP from DnaK; ATP binding to DnaK triggers the release of the substrate protein, thus completing the reaction cycle. Several rounds of ATP-dependent interactions between DnaJ, DnaK and GrpE are required for fully efficient folding. Also involved, together with DnaK and GrpE, in the DNA replication of plasmids through activation of initiation proteins. This Maridesulfovibrio salexigens (strain ATCC 14822 / DSM 2638 / NCIMB 8403 / VKM B-1763) (Desulfovibrio salexigens) protein is Chaperone protein DnaJ.